The sequence spans 137 residues: Methylglyoxal synthase (137 aa).

The region spanning 1–137 (MNIALVAHDK…KLSHNDEPPA (137 aa)) is the MGS-like domain. Substrate is bound by residues His8, Lys12, 34–37 (TGTT), and 54–55 (SG). Asp60 serves as the catalytic Proton donor/acceptor. His87 is a binding site for substrate.

It belongs to the methylglyoxal synthase family.

It carries out the reaction dihydroxyacetone phosphate = methylglyoxal + phosphate. Its function is as follows. Catalyzes the formation of methylglyoxal from dihydroxyacetone phosphate. The protein is Methylglyoxal synthase of Exiguobacterium sp. (strain ATCC BAA-1283 / AT1b).